Reading from the N-terminus, the 63-residue chain is Protein sigN172 (63 aa).

The polypeptide is Protein sigN172 (Dictyostelium discoideum (Social amoeba)).